Reading from the N-terminus, the 285-residue chain is Nucleotide-binding protein Pnap_0906 (285 aa).

An ATP-binding site is contributed by 8–15 (GMSGSGKS). 57–60 (DVRS) contacts GTP.

It belongs to the RapZ-like family.

Its function is as follows. Displays ATPase and GTPase activities. The protein is Nucleotide-binding protein Pnap_0906 of Polaromonas naphthalenivorans (strain CJ2).